A 62-amino-acid polypeptide reads, in one-letter code: DNA-directed RNA polymerase subunit omega (62 aa).

This sequence belongs to the RNA polymerase subunit omega family. In terms of assembly, the RNAP catalytic core consists of 2 alpha, 1 beta, 1 beta' and 1 omega subunit. When a sigma factor is associated with the core the holoenzyme is formed, which can initiate transcription.

The catalysed reaction is RNA(n) + a ribonucleoside 5'-triphosphate = RNA(n+1) + diphosphate. In terms of biological role, promotes RNA polymerase assembly. Latches the N- and C-terminal regions of the beta' subunit thereby facilitating its interaction with the beta and alpha subunits. The sequence is that of DNA-directed RNA polymerase subunit omega from Wigglesworthia glossinidia brevipalpis.